Consider the following 317-residue polypeptide: Beta-ketoacyl-[acyl-carrier-protein] synthase III (317 aa).

Residues Cys112 and His244 contribute to the active site. Residues Gln245–Arg249 form an ACP-binding region. Asn274 is a catalytic residue.

This sequence belongs to the thiolase-like superfamily. FabH family. In terms of assembly, homodimer.

It localises to the cytoplasm. The catalysed reaction is malonyl-[ACP] + acetyl-CoA + H(+) = 3-oxobutanoyl-[ACP] + CO2 + CoA. The protein operates within lipid metabolism; fatty acid biosynthesis. In terms of biological role, catalyzes the condensation reaction of fatty acid synthesis by the addition to an acyl acceptor of two carbons from malonyl-ACP. Catalyzes the first condensation reaction which initiates fatty acid synthesis and may therefore play a role in governing the total rate of fatty acid production. Possesses both acetoacetyl-ACP synthase and acetyl transacylase activities. Its substrate specificity determines the biosynthesis of branched-chain and/or straight-chain of fatty acids. The protein is Beta-ketoacyl-[acyl-carrier-protein] synthase III of Citrobacter koseri (strain ATCC BAA-895 / CDC 4225-83 / SGSC4696).